Here is a 436-residue protein sequence, read N- to C-terminus: Deoxyuridine 5'-triphosphate nucleotidohydrolase (436 aa).

Residues 328–330 (RSS) and 431–432 (FG) each bind substrate.

The protein belongs to the dUTPase family. The cofactor is Mg(2+).

The enzyme catalyses dUTP + H2O = dUMP + diphosphate + H(+). In terms of biological role, involved in nucleotide metabolism: produces dUMP, the immediate precursor of thymidine nucleotides and decreases the intracellular concentration of dUTP to avoid uracil incorporation into viral DNA. The polypeptide is Deoxyuridine 5'-triphosphate nucleotidohydrolase (Gallid herpesvirus 2 (strain Chicken/Md5/ATCC VR-987) (GaHV-2)).